Reading from the N-terminus, the 757-residue chain is Inhibitor of nuclear factor kappa-B kinase subunit beta (757 aa).

The region spanning 15-300 is the Protein kinase domain; that stretch reads WEMKERLGTG…DPQYGPNGCF (286 aa). Residues 21–29 and lysine 44 each bind ATP; that span reads LGTGGFGNV. The Proton acceptor role is filled by aspartate 145. Lysine 163 is covalently cross-linked (Glycyl lysine isopeptide (Lys-Gly) (interchain with G-Cter in ubiquitin)). Residue serine 177 is modified to Phosphoserine; by TBK1 and PKC/PRKCZ. Position 179 is an S-nitrosocysteine (cysteine 179). Position 181 is a phosphoserine; by TBK1, PKC/PRKCZ and PDPK1 (serine 181). Residue proline 191 is modified to Hydroxyproline. Positions 458 to 479 are leucine-zipper; that stretch reads LLRNNSCLSKMKNAMASTAQQL. At serine 670 the chain carries Phosphoserine; by autocatalysis. Serine 672 carries the post-translational modification Phosphoserine. Residues serine 675, serine 682, serine 689, serine 692, serine 697, serine 705, serine 733, and serine 740 each carry the phosphoserine; by autocatalysis modification. The disordered stretch occupies residues 683-703; that stretch reads HPGQLMSQPSSACDSLPESDK. Positions 737–742 are NEMO-binding; sequence LDWSWL.

The protein belongs to the protein kinase superfamily. Ser/Thr protein kinase family. I-kappa-B kinase subfamily. As to quaternary structure, component of the I-kappa-B-kinase (IKK) core complex consisting of CHUK, IKBKB and IKBKG; probably four alpha/CHUK-beta/IKBKB dimers are associated with four gamma/IKBKG subunits. The IKK core complex seems to associate with regulatory or adapter proteins to form a IKK-signalosome holo-complex. The IKK complex associates with TERF2IP/RAP1, leading to promote IKK-mediated phosphorylation of RELA/p65. Part of a complex composed of NCOA2, NCOA3, CHUK/IKKA, IKBKB, IKBKG and CREBBP. Part of a 70-90 kDa complex at least consisting of CHUK/IKKA, IKBKB, NFKBIA, RELA, ELP1 and MAP3K14. Found in a membrane raft complex, at least composed of BCL10, CARD11, DPP4 and IKBKB. Interacts with SQSTM1 through PRKCZ or PRKCI. Forms an NGF-induced complex with IKBKB, PRKCI and TRAF6. May interact with MAVS/IPS1. Interacts with NALP2. Interacts with TICAM1. Interacts with FAF1; the interaction disrupts the IKK complex formation. Interacts with ATM. Part of a ternary complex consisting of TANK, IKBKB and IKBKG. Interacts with NIBP; the interaction is direct. Interacts with ARRB1 and ARRB2. Interacts with TRIM21. Interacts with NLRC5; prevents IKBKB phosphorylation and kinase activity. Interacts with PDPK1. Interacts with EIF2AK2/PKR. The phosphorylated form interacts with PPM1A and PPM1B. Interacts with ZNF268 isoform 2; the interaction is further increased in a TNF-alpha-dependent manner. Interacts with IKBKE. Interacts with ZC3H12A. Interacts with AKAP13. Interacts with LRRC14; disrupts IKBKB-IKBKG interaction preventing I-kappa-B-kinase (IKK) core complex formation and leading to a decrease of IKBKB phosphorylation and NF-kappaB activation. Interacts with SASH1. Interacts with ARFIP2. Interacts with FKBP5. Interacts with kinase TBK1; the complex interacts with STAT1, leading to phosphorylation of STAT1 on 'Thr-748' by IKBKB. In terms of processing, upon cytokine stimulation, phosphorylated on Ser-177 and Ser-181 by MEKK1 and/or MAP3K14/NIK as well as TBK1 and PRKCZ; which enhances activity. Phosphorylated by MAP3K7/TAK1 in response to NOD1 and NOD2 signaling, promoting activation and phosphorylation of NF-kappa-B inhibitors, leading to NF-kappa-B activation. Once activated, autophosphorylates on the C-terminal serine cluster; which decreases activity and prevents prolonged activation of the inflammatory response. Phosphorylated by the IKK-related kinases TBK1 and IKBKE, which is associated with reduced CHUK/IKKA and IKBKB activity and NF-kappa-B-dependent gene transcription. Dephosphorylated at Ser-177 and Ser-181 by PPM1A and PPM1B. Ubiquitinated. Monoubiquitination involves TRIM21 that leads to inhibition of Tax-induced NF-kappa-B signaling. 'Ser-163' may not serve as a monoubiquitination site. Ubiquitination on 'Ser-163' may modulate phosphorylation on C-terminal serine residues. Post-translationally, hydroxylated by PHD1/EGLN2, loss of hydroxylation under hypoxic conditions results in activation of NF-kappa-B. As to expression, detected in heart (at protein level). Expressed in liver, kidney and spleen.

It is found in the cytoplasm. The protein resides in the nucleus. The protein localises to the membrane raft. It carries out the reaction L-seryl-[I-kappa-B protein] + ATP = O-phospho-L-seryl-[I-kappa-B protein] + ADP + H(+). The enzyme catalyses L-seryl-[protein] + ATP = O-phospho-L-seryl-[protein] + ADP + H(+). The catalysed reaction is L-threonyl-[protein] + ATP = O-phospho-L-threonyl-[protein] + ADP + H(+). Functionally, serine kinase that plays an essential role in the NF-kappa-B signaling pathway which is activated by multiple stimuli such as inflammatory cytokines, bacterial or viral products, DNA damages or other cellular stresses. Acts as a part of the canonical IKK complex in the conventional pathway of NF-kappa-B activation. Phosphorylates inhibitors of NF-kappa-B on 2 critical serine residues. These modifications allow polyubiquitination of the inhibitors and subsequent degradation by the proteasome. In turn, free NF-kappa-B is translocated into the nucleus and activates the transcription of hundreds of genes involved in immune response, growth control, or protection against apoptosis. In addition to the NF-kappa-B inhibitors, phosphorylates several other components of the signaling pathway including NEMO/IKBKG, NF-kappa-B subunits RELA and NFKB1, as well as IKK-related kinases TBK1 and IKBKE. IKK-related kinase phosphorylations may prevent the overproduction of inflammatory mediators since they exert a negative regulation on canonical IKKs. Phosphorylates FOXO3, mediating the TNF-dependent inactivation of this pro-apoptotic transcription factor. Also phosphorylates other substrates including NAA10, NCOA3, BCL10 and IRS1. Phosphorylates RIPK1 at 'Ser-25' which represses its kinase activity and consequently prevents TNF-mediated RIPK1-dependent cell death. Phosphorylates the C-terminus of IRF5, stimulating IRF5 homodimerization and translocation into the nucleus. Following bacterial lipopolysaccharide (LPS)-induced TLR4 endocytosis, phosphorylates STAT1 at 'Thr-748' which restricts interferon signaling and anti-inflammatory responses and promotes innate inflammatory responses. IKBKB-mediated phosphorylation of STAT1 at 'Thr-748' promotes binding of STAT1 to the ARID5A promoter, resulting in transcriptional activation of ARID5A and subsequent ARID5A-mediated stabilization of IL6. It also promotes binding of STAT1 to the IL12B promoter and activation of IL12B transcription. In Mus musculus (Mouse), this protein is Inhibitor of nuclear factor kappa-B kinase subunit beta (Ikbkb).